The chain runs to 290 residues: Coiled-coil domain-containing protein 137 (290 aa).

Disordered regions lie at residues Met1–Val92, Leu98–Arg117, Leu139–Ala181, and Arg269–Leu290. The span at Ser20–Ser39 shows a compositional bias: low complexity. Positions Lys56–Lys79 are enriched in basic and acidic residues. The stretch at Arg66 to Glu89 forms a coiled coil. The span at Pro154–Lys163 shows a compositional bias: basic and acidic residues. Residues Lys155–Asp192 adopt a coiled-coil conformation. The segment covering Ala164–Glu178 has biased composition (basic residues).

The protein resides in the chromosome. The chain is Coiled-coil domain-containing protein 137 (Ccdc137) from Mus musculus (Mouse).